Reading from the N-terminus, the 92-residue chain is Small ribosomal subunit protein uS19 (92 aa).

The protein belongs to the universal ribosomal protein uS19 family.

Protein S19 forms a complex with S13 that binds strongly to the 16S ribosomal RNA. This is Small ribosomal subunit protein uS19 from Lysinibacillus sphaericus (strain C3-41).